The following is a 317-amino-acid chain: tRNA dimethylallyltransferase (317 aa).

An ATP-binding site is contributed by 14 to 21 (GPTAVGKT). 16–21 (TAVGKT) contributes to the substrate binding site. The tract at residues 39-42 (DSMQ) is interaction with substrate tRNA.

Belongs to the IPP transferase family. In terms of assembly, monomer. Mg(2+) is required as a cofactor.

It catalyses the reaction adenosine(37) in tRNA + dimethylallyl diphosphate = N(6)-dimethylallyladenosine(37) in tRNA + diphosphate. In terms of biological role, catalyzes the transfer of a dimethylallyl group onto the adenine at position 37 in tRNAs that read codons beginning with uridine, leading to the formation of N6-(dimethylallyl)adenosine (i(6)A). The sequence is that of tRNA dimethylallyltransferase from Bacillus cereus (strain ATCC 14579 / DSM 31 / CCUG 7414 / JCM 2152 / NBRC 15305 / NCIMB 9373 / NCTC 2599 / NRRL B-3711).